Here is a 262-residue protein sequence, read N- to C-terminus: Glucosamine-6-phosphate deaminase (262 aa).

D63 serves as the catalytic Proton acceptor; for enolization step. Catalysis depends on N129, which acts as the For ring-opening step. H131 functions as the Proton acceptor; for ring-opening step in the catalytic mechanism. The For ring-opening step role is filled by E136.

The protein belongs to the glucosamine/galactosamine-6-phosphate isomerase family. NagB subfamily.

It carries out the reaction alpha-D-glucosamine 6-phosphate + H2O = beta-D-fructose 6-phosphate + NH4(+). The protein operates within amino-sugar metabolism; N-acetylneuraminate degradation; D-fructose 6-phosphate from N-acetylneuraminate: step 5/5. In terms of biological role, catalyzes the reversible isomerization-deamination of glucosamine 6-phosphate (GlcN6P) to form fructose 6-phosphate (Fru6P) and ammonium ion. In Bacillus cytotoxicus (strain DSM 22905 / CIP 110041 / 391-98 / NVH 391-98), this protein is Glucosamine-6-phosphate deaminase.